The sequence spans 22 residues: leu leader peptide (22 aa).

Residues 1-22 are disordered; that stretch reads MLHHMTSRANLLLLRRGGSQRS. A compositionally biased stretch (low complexity) spans 11 to 22; that stretch reads LLLLRRGGSQRS.

In terms of biological role, involved in control of the biosynthesis of leucine. This Corynebacterium glutamicum (strain ATCC 13032 / DSM 20300 / JCM 1318 / BCRC 11384 / CCUG 27702 / LMG 3730 / NBRC 12168 / NCIMB 10025 / NRRL B-2784 / 534) protein is leu leader peptide (leuL).